The primary structure comprises 160 residues: Probable cyclic pyranopterin monophosphate synthase (160 aa).

The span at 1 to 12 (MSDDSELTHVTD) shows a compositional bias: basic and acidic residues. Residues 1 to 24 (MSDDSELTHVTDDGDAQMVDVGEK) form a disordered region. Substrate-binding positions include 78–80 (MCH) and 114–115 (ME). The active site involves Asp-129.

The protein belongs to the MoaC family. In terms of assembly, homohexamer; trimer of dimers.

It carries out the reaction (8S)-3',8-cyclo-7,8-dihydroguanosine 5'-triphosphate = cyclic pyranopterin phosphate + diphosphate. It participates in cofactor biosynthesis; molybdopterin biosynthesis. Functionally, catalyzes the conversion of (8S)-3',8-cyclo-7,8-dihydroguanosine 5'-triphosphate to cyclic pyranopterin monophosphate (cPMP). The chain is Probable cyclic pyranopterin monophosphate synthase from Natronomonas pharaonis (strain ATCC 35678 / DSM 2160 / CIP 103997 / JCM 8858 / NBRC 14720 / NCIMB 2260 / Gabara) (Halobacterium pharaonis).